We begin with the raw amino-acid sequence, 139 residues long: Envelope glycoprotein N (139 aa).

Topologically, residues 1–100 (MACGKTESGD…CHSHFYGLSV (100 aa)) are virion surface. The chain crosses the membrane as a helical span at residues 101–121 (SSFASIWMMVNAIVFICAFGV). The Intravirion portion of the chain corresponds to 122-139 (FMRHWCYKAFTSDTAKGY).

The protein belongs to the herpesviridae glycoprotein N family. As to quaternary structure, interacts (via N-terminus) with gM (via N-terminus). The gM-gN heterodimer forms the gCII complex.

Its subcellular location is the virion membrane. The protein localises to the host membrane. It is found in the host Golgi apparatus. The protein resides in the host trans-Golgi network. In terms of biological role, envelope glycoprotein necessary for proper maturation of gM and modulation of its membrane fusion activity. Also plays a critical role in virion morphogenesis. The polypeptide is Envelope glycoprotein N (Mus musculus (Mouse)).